A 269-amino-acid chain; its full sequence is Putative hydro-lyase Atu3911 (269 aa).

This sequence belongs to the D-glutamate cyclase family.

The sequence is that of Putative hydro-lyase Atu3911 from Agrobacterium fabrum (strain C58 / ATCC 33970) (Agrobacterium tumefaciens (strain C58)).